A 149-amino-acid chain; its full sequence is Ribonuclease P protein component (149 aa).

The tract at residues 123–149 (GTKVSRRSNGALHDAAPSSQPDPTVSG) is disordered. The span at 139-149 (PSSQPDPTVSG) shows a compositional bias: polar residues.

The protein belongs to the RnpA family. As to quaternary structure, consists of a catalytic RNA component (M1 or rnpB) and a protein subunit.

It catalyses the reaction Endonucleolytic cleavage of RNA, removing 5'-extranucleotides from tRNA precursor.. Its function is as follows. RNaseP catalyzes the removal of the 5'-leader sequence from pre-tRNA to produce the mature 5'-terminus. It can also cleave other RNA substrates such as 4.5S RNA. The protein component plays an auxiliary but essential role in vivo by binding to the 5'-leader sequence and broadening the substrate specificity of the ribozyme. The polypeptide is Ribonuclease P protein component (Caulobacter vibrioides (strain ATCC 19089 / CIP 103742 / CB 15) (Caulobacter crescentus)).